The following is a 453-amino-acid chain: Tubulin gamma chain (453 aa).

142–148 lines the GTP pocket; sequence AGGTGSG.

Belongs to the tubulin family.

It is found in the cytoplasm. It localises to the cytoskeleton. The protein resides in the microtubule organizing center. Its subcellular location is the spindle pole body. Functionally, tubulin is the major constituent of microtubules. The gamma chain is found at microtubule organizing centers (MTOC) such as the spindle poles or the centrosome, suggesting that it is involved in the minus-end nucleation of microtubule assembly. The chain is Tubulin gamma chain (TUB4) from Coprinopsis cinerea (strain Okayama-7 / 130 / ATCC MYA-4618 / FGSC 9003) (Inky cap fungus).